A 1122-amino-acid chain; its full sequence is Breast carcinoma-amplified sequence 3 homolog (1122 aa).

The tract at residues 1 to 41 (MSADSPRRHPSGVVGSGIGLGSGSGTGLGSGSTGGSKSGAA) is disordered. Positions 14-37 (VGSGIGLGSGSGTGLGSGSTGGSK) are enriched in gly residues. Ser55 bears the Phosphoserine mark. 4 stretches are compositionally biased toward low complexity: residues 357 to 377 (GTTA…ASGG), 626 to 641 (GSNS…SLSD), 966 to 987 (TKDN…PSSN), and 1036 to 1051 (LSLE…PLSL). 5 disordered regions span residues 357–382 (GTTA…DAKQ), 620–644 (GVGV…DDSG), 966–990 (TKDN…NKVQ), 1033–1054 (NSRL…LTNG), and 1071–1122 (GVAQ…RRNL). Ser638 carries the phosphoserine modification. The segment covering 1087-1112 (VDDDDEEEEEEEEELDEEAEPDDDER) has biased composition (acidic residues). Over residues 1113–1122 (EDRPLGRRNL) the composition is skewed to basic and acidic residues.

Belongs to the BCAS3 family. As to expression, expressed in all postembryonic pericardial cells, but not in cardioblasts. Also expressed in Garland cells in third instar larvae (at protein level).

Its subcellular location is the cytoplasm. Functionally, regulates macropinocytosis in pericardial cells. In Drosophila melanogaster (Fruit fly), this protein is Breast carcinoma-amplified sequence 3 homolog (rudhira).